The following is a 241-amino-acid chain: 2-C-methyl-D-erythritol 4-phosphate cytidylyltransferase (241 aa).

Belongs to the IspD/TarI cytidylyltransferase family. IspD subfamily.

It catalyses the reaction 2-C-methyl-D-erythritol 4-phosphate + CTP + H(+) = 4-CDP-2-C-methyl-D-erythritol + diphosphate. The protein operates within isoprenoid biosynthesis; isopentenyl diphosphate biosynthesis via DXP pathway; isopentenyl diphosphate from 1-deoxy-D-xylulose 5-phosphate: step 2/6. Functionally, catalyzes the formation of 4-diphosphocytidyl-2-C-methyl-D-erythritol from CTP and 2-C-methyl-D-erythritol 4-phosphate (MEP). The chain is 2-C-methyl-D-erythritol 4-phosphate cytidylyltransferase from Alkaliphilus metalliredigens (strain QYMF).